The following is a 454-amino-acid chain: Protein odr-4 homolog (454 aa).

2 consecutive transmembrane segments (helical) span residues 82–102 (MLPG…ELAN) and 432–452 (IGVI…FHYF).

The protein belongs to the ODR-4 family.

The protein localises to the membrane. Its function is as follows. May play a role in the trafficking of a subset of G-protein coupled receptors. In Pongo abelii (Sumatran orangutan), this protein is Protein odr-4 homolog (ODR4).